A 140-amino-acid polypeptide reads, in one-letter code: Nucleoside diphosphate kinase (140 aa).

Residues lysine 11, phenylalanine 59, arginine 87, threonine 93, arginine 104, and asparagine 114 each coordinate ATP. The Pros-phosphohistidine intermediate role is filled by histidine 117.

This sequence belongs to the NDK family. Homotetramer. It depends on Mg(2+) as a cofactor.

The protein resides in the cytoplasm. The enzyme catalyses a 2'-deoxyribonucleoside 5'-diphosphate + ATP = a 2'-deoxyribonucleoside 5'-triphosphate + ADP. The catalysed reaction is a ribonucleoside 5'-diphosphate + ATP = a ribonucleoside 5'-triphosphate + ADP. Functionally, major role in the synthesis of nucleoside triphosphates other than ATP. The ATP gamma phosphate is transferred to the NDP beta phosphate via a ping-pong mechanism, using a phosphorylated active-site intermediate. This is Nucleoside diphosphate kinase from Rhizobium etli (strain CIAT 652).